A 307-amino-acid chain; its full sequence is Protease HtpX homolog (307 aa).

Residues 16 to 36 (LFMGVGYLIGGAAGAMIALVV) traverse the membrane as a helical segment. Residue histidine 130 coordinates Zn(2+). Glutamate 131 is a catalytic residue. Residue histidine 134 coordinates Zn(2+). The next 2 membrane-spanning stretches (helical) occupy residues 145-165 (ITAT…FFGG) and 172-192 (GPGI…AMLV). Glutamate 201 contributes to the Zn(2+) binding site. A disordered region spans residues 278–307 (AGQSGSATPDPAPAPRGPWNGGAPRRGPWG).

Belongs to the peptidase M48B family. Zn(2+) is required as a cofactor.

It localises to the cell inner membrane. The chain is Protease HtpX homolog from Nitrobacter hamburgensis (strain DSM 10229 / NCIMB 13809 / X14).